A 306-amino-acid polypeptide reads, in one-letter code: Ribonuclease H2 subunit B (306 aa).

The segment at 232–285 (LPDLSSPTPEPPVKKRKVSEAPVEAEEDYTKFNSDSKNKKSNSKMTAAQKSLAK) is disordered. Residues 259–269 (DYTKFNSDSKN) are compositionally biased toward basic and acidic residues.

This sequence belongs to the RNase H2 subunit B family. The RNase H2 complex is a heterotrimer composed of the catalytic subunit rnaseh2a and the non-catalytic subunits rnaseh2b and rnaseh2c.

It is found in the nucleus. Non catalytic subunit of RNase H2, an endonuclease that specifically degrades the RNA of RNA:DNA hybrids. Participates in DNA replication, possibly by mediating the removal of lagging-strand Okazaki fragment RNA primers during DNA replication. Mediates the excision of single ribonucleotides from DNA:RNA duplexes. The polypeptide is Ribonuclease H2 subunit B (rnaseh2b) (Xenopus tropicalis (Western clawed frog)).